A 570-amino-acid polypeptide reads, in one-letter code: Hydroxylamine reductase (570 aa).

Residues cysteine 5, cysteine 8, cysteine 17, and cysteine 23 each contribute to the [4Fe-4S] cluster site. The hybrid [4Fe-2O-2S] cluster site is built by histidine 266, glutamate 290, cysteine 334, cysteine 425, cysteine 453, cysteine 478, glutamate 513, and lysine 515. Cysteine persulfide is present on cysteine 425.

It belongs to the HCP family. It depends on [4Fe-4S] cluster as a cofactor. Hybrid [4Fe-2O-2S] cluster serves as cofactor.

Its subcellular location is the cytoplasm. It carries out the reaction A + NH4(+) + H2O = hydroxylamine + AH2 + H(+). Catalyzes the reduction of hydroxylamine to form NH(3) and H(2)O. In Clostridium botulinum (strain 657 / Type Ba4), this protein is Hydroxylamine reductase.